Reading from the N-terminus, the 216-residue chain is Flagellar transcriptional regulator FlhC (216 aa).

The Zn(2+) site is built by Cys137, Cys140, Cys157, and Cys160.

The protein belongs to the FlhC family. In terms of assembly, heterohexamer composed of two FlhC and four FlhD subunits. Each FlhC binds a FlhD dimer, forming a heterotrimer, and a hexamer assembles by dimerization of two heterotrimers. Requires Zn(2+) as cofactor.

Its subcellular location is the cytoplasm. In terms of biological role, functions in complex with FlhD as a master transcriptional regulator that regulates transcription of several flagellar and non-flagellar operons by binding to their promoter region. Activates expression of class 2 flagellar genes, including fliA, which is a flagellum-specific sigma factor that turns on the class 3 genes. Also regulates genes whose products function in a variety of physiological pathways. This Paraburkholderia atlantica protein is Flagellar transcriptional regulator FlhC.